A 258-amino-acid chain; its full sequence is UPF0246 protein YaaA (258 aa).

The protein belongs to the UPF0246 family.

This chain is UPF0246 protein YaaA, found in Escherichia coli (strain SMS-3-5 / SECEC).